The sequence spans 583 residues: Membrane protein insertase YidC (583 aa).

The chain crosses the membrane as a helical span at residues 5 to 25; the sequence is SVTGLALIALIMIVWLQFMSP. The interval 28 to 50 is disordered; it reads KSVQPDNRPKAQTTATVSQEKTE. Residues 37 to 46 show a composition bias toward polar residues; sequence KAQTTATVSQ. 5 helical membrane-spanning segments follow: residues 341–361, 362–382, 427–447, 477–497, and 515–535; these read PFAEYVILPVFTWMNGFISNY, GLIIIIFALLIKLVTYPLSMA, LGGCLPVVLQMPLLFAMFYVF, IPVYGDHIAVFPILMGVTVFI, and LYIFPVTMLLFFNNLPAGLGL.

The protein belongs to the OXA1/ALB3/YidC family. Type 1 subfamily. In terms of assembly, interacts with the Sec translocase complex via SecD. Specifically interacts with transmembrane segments of nascent integral membrane proteins during membrane integration.

It is found in the cell inner membrane. In terms of biological role, required for the insertion and/or proper folding and/or complex formation of integral membrane proteins into the membrane. Involved in integration of membrane proteins that insert both dependently and independently of the Sec translocase complex, as well as at least some lipoproteins. Aids folding of multispanning membrane proteins. This chain is Membrane protein insertase YidC, found in Chlorobium limicola (strain DSM 245 / NBRC 103803 / 6330).